A 95-amino-acid chain; its full sequence is Large ribosomal subunit protein eL37z (95 aa).

Zn(2+) is bound by residues Cys-19, Cys-22, Cys-34, and Cys-37. The segment at 19–37 (CVRCGRRSFHIQKSRCSAC) adopts a C4-type zinc-finger fold.

This sequence belongs to the eukaryotic ribosomal protein eL37 family. Requires Zn(2+) as cofactor.

Its function is as follows. Binds to the 23S rRNA. In Arabidopsis thaliana (Mouse-ear cress), this protein is Large ribosomal subunit protein eL37z (RPL37A).